The primary structure comprises 283 residues: ATP synthase gamma chain (283 aa).

Belongs to the ATPase gamma chain family. In terms of assembly, F-type ATPases have 2 components, CF(1) - the catalytic core - and CF(0) - the membrane proton channel. CF(1) has five subunits: alpha(3), beta(3), gamma(1), delta(1), epsilon(1). CF(0) has three main subunits: a, b and c.

The protein localises to the cell inner membrane. Functionally, produces ATP from ADP in the presence of a proton gradient across the membrane. The gamma chain is believed to be important in regulating ATPase activity and the flow of protons through the CF(0) complex. This Ehrlichia ruminantium (strain Gardel) protein is ATP synthase gamma chain.